A 170-amino-acid polypeptide reads, in one-letter code: tRNA-splicing endonuclease (170 aa).

Residues tyrosine 110, histidine 116, and lysine 147 contribute to the active site.

This sequence belongs to the tRNA-intron endonuclease family. Archaeal short subfamily. In terms of assembly, homotetramer; although the tetramer contains four active sites, only two participate in the cleavage. Therefore, it should be considered as a dimer of dimers.

It catalyses the reaction pretRNA = a 3'-half-tRNA molecule with a 5'-OH end + a 5'-half-tRNA molecule with a 2',3'-cyclic phosphate end + an intron with a 2',3'-cyclic phosphate and a 5'-hydroxyl terminus.. Endonuclease that removes tRNA introns. Cleaves pre-tRNA at the 5'- and 3'-splice sites to release the intron. The products are an intron and two tRNA half-molecules bearing 2',3' cyclic phosphate and 5'-OH termini. Recognizes a pseudosymmetric substrate in which 2 bulged loops of 3 bases are separated by a stem of 4 bp. The sequence is that of tRNA-splicing endonuclease from Pyrococcus abyssi (strain GE5 / Orsay).